We begin with the raw amino-acid sequence, 542 residues long: Hydroxylamine reductase (542 aa).

[4Fe-4S] cluster is bound by residues C5, C8, C17, and C23. Positions 237, 261, 305, 397, 425, 450, 485, and 487 each coordinate hybrid [4Fe-2O-2S] cluster. C397 carries the cysteine persulfide modification.

This sequence belongs to the HCP family. [4Fe-4S] cluster serves as cofactor. It depends on hybrid [4Fe-2O-2S] cluster as a cofactor.

The protein localises to the cytoplasm. The enzyme catalyses A + NH4(+) + H2O = hydroxylamine + AH2 + H(+). Functionally, catalyzes the reduction of hydroxylamine to form NH(3) and H(2)O. The protein is Hydroxylamine reductase of Acetivibrio thermocellus (strain ATCC 27405 / DSM 1237 / JCM 9322 / NBRC 103400 / NCIMB 10682 / NRRL B-4536 / VPI 7372) (Clostridium thermocellum).